A 273-amino-acid polypeptide reads, in one-letter code: Large ribosomal subunit protein uL2 (273 aa).

2 disordered regions span residues 28-53 (KPFA…TTRH) and 221-273 (RGTA…RRTK). A compositionally biased stretch (low complexity) spans 39–48 (KSGGRNNNGR).

It belongs to the universal ribosomal protein uL2 family. Part of the 50S ribosomal subunit. Forms a bridge to the 30S subunit in the 70S ribosome.

In terms of biological role, one of the primary rRNA binding proteins. Required for association of the 30S and 50S subunits to form the 70S ribosome, for tRNA binding and peptide bond formation. It has been suggested to have peptidyltransferase activity; this is somewhat controversial. Makes several contacts with the 16S rRNA in the 70S ribosome. The protein is Large ribosomal subunit protein uL2 of Pectobacterium atrosepticum (strain SCRI 1043 / ATCC BAA-672) (Erwinia carotovora subsp. atroseptica).